The sequence spans 185 residues: Acireductone dioxygenase (185 aa).

The Fe(2+) site is built by His-101, His-103, Glu-107, and His-145. His-101, His-103, Glu-107, and His-145 together coordinate Ni(2+).

This sequence belongs to the acireductone dioxygenase (ARD) family. In terms of assembly, monomer. Fe(2+) is required as a cofactor. The cofactor is Ni(2+).

It catalyses the reaction 1,2-dihydroxy-5-(methylsulfanyl)pent-1-en-3-one + O2 = 3-(methylsulfanyl)propanoate + CO + formate + 2 H(+). The enzyme catalyses 1,2-dihydroxy-5-(methylsulfanyl)pent-1-en-3-one + O2 = 4-methylsulfanyl-2-oxobutanoate + formate + 2 H(+). Its pathway is amino-acid biosynthesis; L-methionine biosynthesis via salvage pathway; L-methionine from S-methyl-5-thio-alpha-D-ribose 1-phosphate: step 5/6. Functionally, catalyzes 2 different reactions between oxygen and the acireductone 1,2-dihydroxy-3-keto-5-methylthiopentene (DHK-MTPene) depending upon the metal bound in the active site. Fe-containing acireductone dioxygenase (Fe-ARD) produces formate and 2-keto-4-methylthiobutyrate (KMTB), the alpha-ketoacid precursor of methionine in the methionine recycle pathway. Ni-containing acireductone dioxygenase (Ni-ARD) produces methylthiopropionate, carbon monoxide and formate, and does not lie on the methionine recycle pathway. In Synechococcus sp. (strain RCC307), this protein is Acireductone dioxygenase.